The sequence spans 291 residues: MEMO1 family protein TK1477 (291 aa).

The protein belongs to the MEMO1 family.

The polypeptide is MEMO1 family protein TK1477 (Thermococcus kodakarensis (strain ATCC BAA-918 / JCM 12380 / KOD1) (Pyrococcus kodakaraensis (strain KOD1))).